A 151-amino-acid polypeptide reads, in one-letter code: Putative phosphatidylglycerol/phosphatidylinositol transfer protein 1 (151 aa).

The first 26 residues, 1–26, serve as a signal peptide directing secretion; sequence MKHSKNQIVYITFFIIILIVVKPIES.

The protein belongs to the NPC2 family. Monomer.

Functionally, catalyzes the intermembrane transfer of phosphatidylglycerol and phosphatidylinositol. The polypeptide is Putative phosphatidylglycerol/phosphatidylinositol transfer protein 1 (Dictyostelium discoideum (Social amoeba)).